Here is a 116-residue protein sequence, read N- to C-terminus: T cell receptor alpha variable 38-1 (116 aa).

The N-terminal stretch at 1–21 is a signal peptide; that stretch reads MTRVSLLWAVVVSTCLESGMA. The Ig-like domain occupies 22-116; that stretch reads QTVTQSQPEM…TAMYFCAFMK (95 aa). Cys43 and Cys112 are disulfide-bonded. An N-linked (GlcNAc...) asparagine glycan is attached at Asn78.

Alpha-beta TR is a heterodimer composed of an alpha and beta chain; disulfide-linked. The alpha-beta TR is associated with the transmembrane signaling CD3 coreceptor proteins to form the TR-CD3 (TcR or TCR). The assembly of alpha-beta TR heterodimers with CD3 occurs in the endoplasmic reticulum where a single alpha-beta TR heterodimer associates with one CD3D-CD3E heterodimer, one CD3G-CD3E heterodimer and one CD247 homodimer forming a stable octameric structure. CD3D-CD3E and CD3G-CD3E heterodimers preferentially associate with TR alpha and TR beta chains, respectively. The association of the CD247 homodimer is the last step of TcR assembly in the endoplasmic reticulum and is required for transport to the cell surface.

Its subcellular location is the cell membrane. Functionally, v region of the variable domain of T cell receptor (TR) alpha chain that participates in the antigen recognition. Alpha-beta T cell receptors are antigen specific receptors which are essential to the immune response and are present on the cell surface of T lymphocytes. Recognize peptide-major histocompatibility (MH) (pMH) complexes that are displayed by antigen presenting cells (APC), a prerequisite for efficient T cell adaptive immunity against pathogens. Binding of alpha-beta TR to pMH complex initiates TR-CD3 clustering on the cell surface and intracellular activation of LCK that phosphorylates the ITAM motifs of CD3G, CD3D, CD3E and CD247 enabling the recruitment of ZAP70. In turn ZAP70 phosphorylates LAT, which recruits numerous signaling molecules to form the LAT signalosome. The LAT signalosome propagates signal branching to three major signaling pathways, the calcium, the mitogen-activated protein kinase (MAPK) kinase and the nuclear factor NF-kappa-B (NF-kB) pathways, leading to the mobilization of transcription factors that are critical for gene expression and essential for T cell growth and differentiation. The T cell repertoire is generated in the thymus, by V-(D)-J rearrangement. This repertoire is then shaped by intrathymic selection events to generate a peripheral T cell pool of self-MH restricted, non-autoaggressive T cells. Post-thymic interaction of alpha-beta TR with the pMH complexes shapes TR structural and functional avidity. This is T cell receptor alpha variable 38-1 from Homo sapiens (Human).